The following is a 928-amino-acid chain: Dual serine/threonine and tyrosine protein kinase (928 aa).

A compositionally biased stretch (low complexity) spans 1–14 (MEGDGVPWGSEPES). Disordered stretches follow at residues 1–22 (MEGD…GGGG) and 55–81 (LRGS…AGDV). Residues 394–430 (RKKENELYESLMNIANRKQEEMKDMIVETLNTMKEEL) are a coiled coil. The Protein kinase domain occupies 651–905 (PKLGQELGRG…PLLGIVQPML (255 aa)). Residues 657–665 (LGRGQYGVV) and Lys680 contribute to the ATP site. Asp776 serves as the catalytic Proton acceptor.

It belongs to the protein kinase superfamily. Ser/Thr protein kinase family.

It is found in the cytoplasm. The protein resides in the cell membrane. It localises to the apical cell membrane. Its subcellular location is the basolateral cell membrane. The protein localises to the cell junction. It catalyses the reaction L-seryl-[protein] + ATP = O-phospho-L-seryl-[protein] + ADP + H(+). It carries out the reaction L-threonyl-[protein] + ATP = O-phospho-L-threonyl-[protein] + ADP + H(+). The catalysed reaction is L-tyrosyl-[protein] + ATP = O-phospho-L-tyrosyl-[protein] + ADP + H(+). In terms of biological role, acts as a positive regulator of ERK phosphorylation downstream of fibroblast growth factor-receptor activation. Involved in the regulation of both caspase-dependent apoptosis and caspase-independent cell death. In the skin, it plays a predominant role in suppressing caspase-dependent apoptosis in response to UV stress in a range of dermal cell types. The protein is Dual serine/threonine and tyrosine protein kinase (DSTYK) of Bos taurus (Bovine).